We begin with the raw amino-acid sequence, 219 residues long: Probable nicotinate-nucleotide adenylyltransferase (219 aa).

Belongs to the NadD family.

It catalyses the reaction nicotinate beta-D-ribonucleotide + ATP + H(+) = deamido-NAD(+) + diphosphate. Its pathway is cofactor biosynthesis; NAD(+) biosynthesis; deamido-NAD(+) from nicotinate D-ribonucleotide: step 1/1. Catalyzes the reversible adenylation of nicotinate mononucleotide (NaMN) to nicotinic acid adenine dinucleotide (NaAD). This Cronobacter sakazakii (strain ATCC BAA-894) (Enterobacter sakazakii) protein is Probable nicotinate-nucleotide adenylyltransferase.